We begin with the raw amino-acid sequence, 305 residues long: Dihydroorotate dehydrogenase B (NAD(+)), catalytic subunit (305 aa).

Residues serine 21 and 45 to 46 (KG) contribute to the FMN site. Residues lysine 45 and 69–73 (NAVGL) each bind substrate. Residues asparagine 99 and asparagine 127 each coordinate FMN. Residue asparagine 127 coordinates substrate. Catalysis depends on cysteine 130, which acts as the Nucleophile. Lysine 165 and isoleucine 191 together coordinate FMN. Substrate is bound at residue 192 to 193 (NT). FMN-binding positions include glycine 217, 243–244 (GG), and 265–266 (GT).

It belongs to the dihydroorotate dehydrogenase family. Type 1 subfamily. In terms of assembly, heterotetramer of 2 PyrK and 2 PyrD type B subunits. The cofactor is FMN.

It localises to the cytoplasm. The enzyme catalyses (S)-dihydroorotate + NAD(+) = orotate + NADH + H(+). The protein operates within pyrimidine metabolism; UMP biosynthesis via de novo pathway; orotate from (S)-dihydroorotate (NAD(+) route): step 1/1. Functionally, catalyzes the conversion of dihydroorotate to orotate with NAD(+) as electron acceptor. This chain is Dihydroorotate dehydrogenase B (NAD(+)), catalytic subunit (pyrD), found in Parabacteroides distasonis (strain ATCC 8503 / DSM 20701 / CIP 104284 / JCM 5825 / NCTC 11152).